We begin with the raw amino-acid sequence, 193 residues long: Inosine triphosphate pyrophosphatase (193 aa).

Residue 10-15 (TGNANK) coordinates ITP. A Mg(2+)-binding site is contributed by glutamate 42. ITP-binding positions include lysine 54, 70–71 (DT), lysine 87, 146–149 (FGWD), lysine 169, and 174–175 (HR).

This sequence belongs to the HAM1 NTPase family. In terms of assembly, homodimer. Requires Mg(2+) as cofactor. Mn(2+) serves as cofactor.

It localises to the cytoplasm. It is found in the nucleus. It catalyses the reaction ITP + H2O = IMP + diphosphate + H(+). It carries out the reaction dITP + H2O = dIMP + diphosphate + H(+). The enzyme catalyses XTP + H2O = XMP + diphosphate + H(+). Pyrophosphatase that hydrolyzes non-canonical purine nucleotides such as inosine triphosphate (ITP), deoxyinosine triphosphate (dITP) or xanthosine 5'-triphosphate (XTP) to their respective monophosphate derivatives. The enzyme does not distinguish between the deoxy- and ribose forms. Probably excludes non-canonical purines from RNA and DNA precursor pools, thus preventing their incorporation into RNA and DNA and avoiding chromosomal lesions. This chain is Inosine triphosphate pyrophosphatase, found in Mycosarcoma maydis (Corn smut fungus).